A 308-amino-acid chain; its full sequence is Quinolinate synthase (308 aa).

Iminosuccinate contacts are provided by H21 and S38. C83 serves as a coordination point for [4Fe-4S] cluster. Residues 109–111 and S126 each bind iminosuccinate; that span reads YIN. C170 is a binding site for [4Fe-4S] cluster. Residues 196 to 198 and T213 contribute to the iminosuccinate site; that span reads HPE. Residue C263 participates in [4Fe-4S] cluster binding.

The protein belongs to the quinolinate synthase family. Type 2 subfamily. It depends on [4Fe-4S] cluster as a cofactor.

It localises to the cytoplasm. It carries out the reaction iminosuccinate + dihydroxyacetone phosphate = quinolinate + phosphate + 2 H2O + H(+). The protein operates within cofactor biosynthesis; NAD(+) biosynthesis; quinolinate from iminoaspartate: step 1/1. Catalyzes the condensation of iminoaspartate with dihydroxyacetone phosphate to form quinolinate. This Sulfurisphaera tokodaii (strain DSM 16993 / JCM 10545 / NBRC 100140 / 7) (Sulfolobus tokodaii) protein is Quinolinate synthase.